The sequence spans 337 residues: Diacylglycerol O-acyltransferase 2-like protein 6 (337 aa).

2 helical membrane-spanning segments follow: residues 22–42 (IPVY…LLLF) and 102–122 (YIIL…NFAT).

This sequence belongs to the diacylglycerol acyltransferase family.

The protein resides in the endoplasmic reticulum membrane. It carries out the reaction 1,2-di-(9Z-octadecenoyl)-sn-glycerol + (9Z)-octadecenoyl-CoA = 1,2,3-tri-(9Z-octadecenoyl)-glycerol + CoA. Functionally, diglyceride acyltransferase that uses fatty acyl-CoA as substrate. Particularly active with oleate as a substrate. Has no wax synthase activity to produce wax esters. This chain is Diacylglycerol O-acyltransferase 2-like protein 6 (Dgat2l6), found in Mus musculus (Mouse).